An 897-amino-acid chain; its full sequence is Protein translocase subunit SecA (897 aa).

ATP contacts are provided by residues Gln89, 107–111 (GEGKT), and Asp517. Over residues 839 to 856 (DDAQATHSNPNEQTKQAS) the composition is skewed to polar residues. Residues 839–897 (DDAQATHSNPNEQTKQASITNNIQTQTDQQNTYQRKEKKVGRNEPCPCGSGKKYKKCHG) form a disordered region. Low complexity predominate over residues 857 to 870 (ITNNIQTQTDQQNT). Residues Cys884, Cys886, Cys895, and His896 each contribute to the Zn(2+) site.

This sequence belongs to the SecA family. In terms of assembly, monomer and homodimer. Part of the essential Sec protein translocation apparatus which comprises SecA, SecYEG and auxiliary proteins SecDF-YajC and YidC. Zn(2+) serves as cofactor.

Its subcellular location is the cell inner membrane. It is found in the cytoplasm. The enzyme catalyses ATP + H2O + cellular proteinSide 1 = ADP + phosphate + cellular proteinSide 2.. Part of the Sec protein translocase complex. Interacts with the SecYEG preprotein conducting channel. Has a central role in coupling the hydrolysis of ATP to the transfer of proteins into and across the cell membrane, serving as an ATP-driven molecular motor driving the stepwise translocation of polypeptide chains across the membrane. In Vesicomyosocius okutanii subsp. Calyptogena okutanii (strain HA), this protein is Protein translocase subunit SecA.